Here is a 79-residue protein sequence, read N- to C-terminus: Mipartoxin-3 (79 aa).

The first 21 residues, 1–21, serve as a signal peptide directing secretion; that stretch reads MKTLLLTLVVVTIVCLDLGNS. Intrachain disulfides connect cysteine 24–cysteine 41, cysteine 34–cysteine 59, cysteine 63–cysteine 71, and cysteine 72–cysteine 77.

The protein belongs to the three-finger toxin family. Short-chain subfamily. As to expression, expressed by the venom gland.

It is found in the secreted. Its function is as follows. Snake venom neurotoxin that blocks neuromuscular transmission, presenting a postsynaptic action through the nicotinic acetylcholine receptor (nAChR). Has no cytotoxic activity. This is Mipartoxin-3 from Micrurus mipartitus (Red-tailed coral snake).